Here is a 378-residue protein sequence, read N- to C-terminus: MIPKEEVERPQKKTKLPSLPCETSLFLQLPDEILVNCLARLSKSSYRSLSLVCKTFRSLLHSQPLYSARYQLGTTEICCLYLCLRFVTATEPVSRWFTLSRRSGSVLVPSDHSLPYSNSTVTMGSKIYGEHMGDAFGPSSAIWIYDCFTRSWGDVPNMKMKRENASACVLDDKIYVMGGCDSGGINWFEMFDVKTQCWRPLPANPDVKVMTEDNVRKIDVVGGKIYVKTGAEFMDWIYDVKRGKWSAADEYMSLLWSNSWCVIENVMYCYSCSRYRWYDLEARMWREVKGLKYLKRYSSASNDNRNRMVELVNFGGKLAILWDRFERPGRSENKNIWCAMVALNRDFEGEIWGTVEWLNVVLTVPKSYNFLRPIAVSV.

The region spanning 23–69 is the F-box domain; it reads TSLFLQLPDEILVNCLARLSKSSYRSLSLVCKTFRSLLHSQPLYSAR. Kelch repeat units follow at residues 124–172, 173–218, 220–259, and 260–305; these read GSKI…VLDD, KIYV…VRKI, VVGG…WSNS, and WCVI…NDNR.

This Arabidopsis thaliana (Mouse-ear cress) protein is F-box/kelch-repeat protein At4g29370.